Here is a 207-residue protein sequence, read N- to C-terminus: Outer-membrane lipoprotein carrier protein (207 aa).

The first 21 residues, 1-21, serve as a signal peptide directing secretion; sequence MRAIRMLLVSALTLGSVTAYA.

This sequence belongs to the LolA family. As to quaternary structure, monomer.

Its subcellular location is the periplasm. Its function is as follows. Participates in the translocation of lipoproteins from the inner membrane to the outer membrane. Only forms a complex with a lipoprotein if the residue after the N-terminal Cys is not an aspartate (The Asp acts as a targeting signal to indicate that the lipoprotein should stay in the inner membrane). This is Outer-membrane lipoprotein carrier protein from Pseudomonas putida (strain ATCC 47054 / DSM 6125 / CFBP 8728 / NCIMB 11950 / KT2440).